The sequence spans 505 residues: Membrane-bound O-acyltransferase GUP1 (505 aa).

The Extracellular segment spans residues 1–217; that stretch reads MFKAAMDASN…VAPIPLTDYN (217 aa). Residues 218–238 traverse the membrane as a helical segment; sequence FVNYMAYITYAPLFIAGPIIT. Residues 239–266 are Cytoplasmic-facing; that stretch reads FNDYIYQSDYKAMSSVKDYKRTFIYFLR. The chain crosses the membrane as a helical span at residues 267–287; that stretch reads FAFCILVMEFLLHFMYVVAVS. The Extracellular portion of the chain corresponds to 288–296; that stretch reads KTKAWEGDT. The chain crosses the membrane as a helical span at residues 297–317; sequence PFQLSMLGLFNLNIIWLKLLI. Residues 318–377 lie on the Cytoplasmic side of the membrane; the sequence is PWRLFRLWSLIDGIDPPENMIRCMDNNFSTLAFWRAWHRSYNRWIIRYIYIPLGGGGKYR. The next 2 helical transmembrane spans lie at 378–398 and 399–419; these read ILNS…ELKL and LMWG…TAIF. The active site involves H392. The Cytoplasmic segment spans residues 420-430; sequence KNYQHEPWYRH. Residues 431–451 form a helical membrane-spanning segment; sequence VCALGAVINIWMMMLANLFGF. The Extracellular segment spans residues 452–464; that stretch reads CMGKDGTMSLIKT. Residues 465 to 485 traverse the membrane as a helical segment; the sequence is LFTTAVGLRFLFLSLGALFVG. Topologically, residues 486–505 are cytoplasmic; that stretch reads SQVMFELREAEKRRGVNVKC.

This sequence belongs to the membrane-bound acyltransferase family.

The protein resides in the cell membrane. The protein localises to the endoplasmic reticulum membrane. Its subcellular location is the mitochondrion membrane. Functionally, membrane-bound O-acyltransferase involved in the remodeling of glycosylphosphatidylinositol (GPI) anchors. Acts only on GPI-anchored proteins, but not on free GPI lipids. Also involved in lipid metabolism, having profound effects on sphingolipid-sterol-ordered domains integrity and assembly. Involved in cell integrity and apoptosis. This Millerozyma farinosa (Yeast) protein is Membrane-bound O-acyltransferase GUP1 (GUP1).